The sequence spans 299 residues: Protease HtpX homolog (299 aa).

The next 2 membrane-spanning stretches (helical) occupy residues 14–34 (WLLL…VGNL) and 39–59 (GFGG…TMIF). H143 contacts Zn(2+). Residue E144 is part of the active site. H147 provides a ligand contact to Zn(2+). The next 2 helical transmembrane spans lie at 153-173 (IRIS…AGMA) and 198-218 (IVFL…ATLV). E227 is a Zn(2+) binding site.

Belongs to the peptidase M48B family. Zn(2+) serves as cofactor.

It localises to the cell membrane. In Streptococcus thermophilus (strain ATCC BAA-250 / LMG 18311), this protein is Protease HtpX homolog.